Here is a 144-residue protein sequence, read N- to C-terminus: Probable DNA-directed RNA polymerases I and III subunit RPAC2 (144 aa).

The tract at residues 14–47 (KVEAETMEVDEQPQETPQVDDEEDLNVPSKKKME) is disordered. The span at 18–38 (ETMEVDEQPQETPQVDDEEDL) shows a compositional bias: acidic residues.

Belongs to the archaeal Rpo11/eukaryotic RPB11/RPC19 RNA polymerase subunit family. As to quaternary structure, component of the RNA polymerase I (Pol I) and RNA polymerase III (Pol III) complexes consisting of at least 13 and 17 subunits, respectively.

Its subcellular location is the nucleus. DNA-dependent RNA polymerase catalyzes the transcription of DNA into RNA using the four ribonucleoside triphosphates as substrates. Common core component of RNA polymerases I and III which synthesize ribosomal RNA precursors and small RNAs, such as 5S rRNA and tRNAs, respectively. The sequence is that of Probable DNA-directed RNA polymerases I and III subunit RPAC2 (rpac-19) from Caenorhabditis elegans.